The primary structure comprises 716 residues: Amino-acid acetyltransferase, mitochondrial (716 aa).

The transit peptide at 1–44 (MSLHTGWPRTVNSSFLKKHRSSLCTCQHTSSVLPRSFSTTPDRH) directs the protein to the mitochondrion. Polar residues predominate over residues 37–56 (FSTTPDRHVQQSADFSSTSR). Disordered stretches follow at residues 37-58 (FSTT…SRSY) and 96-121 (KAQH…TLPS). Residues 101–112 (KSPDANKPEPEK) show a composition bias toward basic and acidic residues. Positions 537-706 (SRPRLKLDDP…YEAVCRSIQP (170 aa)) constitute an N-acetyltransferase domain.

Belongs to the acetyltransferase family.

It localises to the mitochondrion. It catalyses the reaction L-glutamate + acetyl-CoA = N-acetyl-L-glutamate + CoA + H(+). It participates in amino-acid biosynthesis; L-arginine biosynthesis; N(2)-acetyl-L-ornithine from L-glutamate: step 1/4. Its function is as follows. N-acetylglutamate synthase involved in arginine biosynthesis. The protein is Amino-acid acetyltransferase, mitochondrial (arg2) of Aspergillus fumigatus (strain CBS 144.89 / FGSC A1163 / CEA10) (Neosartorya fumigata).